Here is a 355-residue protein sequence, read N- to C-terminus: Protein RecA (355 aa).

67–74 (GPESSGKT) is a binding site for ATP. Residues 335-355 (NSLVSDVESEDEGASESNEEF) form a disordered region. Residues 341–355 (VESEDEGASESNEEF) are compositionally biased toward acidic residues.

The protein belongs to the RecA family.

The protein resides in the cytoplasm. Functionally, can catalyze the hydrolysis of ATP in the presence of single-stranded DNA, the ATP-dependent uptake of single-stranded DNA by duplex DNA, and the ATP-dependent hybridization of homologous single-stranded DNAs. It interacts with LexA causing its activation and leading to its autocatalytic cleavage. The polypeptide is Protein RecA (Sodalis glossinidius).